The sequence spans 388 residues: LL-diaminopimelate aminotransferase (388 aa).

Substrate-binding residues include Tyr-16 and Gly-41. Pyridoxal 5'-phosphate-binding positions include Tyr-70, 104 to 105, Tyr-129, Asn-179, Tyr-210, and 239 to 241; these read SK and SLS. 3 residues coordinate substrate: Lys-105, Tyr-129, and Asn-179. Lys-242 carries the N6-(pyridoxal phosphate)lysine modification. Position 250 (Arg-250) interacts with pyridoxal 5'-phosphate. Arg-368 provides a ligand contact to substrate.

This sequence belongs to the class-I pyridoxal-phosphate-dependent aminotransferase family. LL-diaminopimelate aminotransferase subfamily. Homodimer. Pyridoxal 5'-phosphate serves as cofactor.

It catalyses the reaction (2S,6S)-2,6-diaminopimelate + 2-oxoglutarate = (S)-2,3,4,5-tetrahydrodipicolinate + L-glutamate + H2O + H(+). The protein operates within amino-acid biosynthesis; L-lysine biosynthesis via DAP pathway; LL-2,6-diaminopimelate from (S)-tetrahydrodipicolinate (aminotransferase route): step 1/1. Its function is as follows. Involved in the synthesis of meso-diaminopimelate (m-DAP or DL-DAP), required for both lysine and peptidoglycan biosynthesis. Catalyzes the direct conversion of tetrahydrodipicolinate to LL-diaminopimelate. The protein is LL-diaminopimelate aminotransferase of Nitratidesulfovibrio vulgaris (strain DP4) (Desulfovibrio vulgaris).